Consider the following 522-residue polypeptide: Probable cytochrome P450 12e1, mitochondrial (522 aa).

Cys468 is a binding site for heme.

The protein belongs to the cytochrome P450 family. Requires heme as cofactor.

The protein localises to the mitochondrion membrane. The sequence is that of Probable cytochrome P450 12e1, mitochondrial (Cyp12e1) from Drosophila melanogaster (Fruit fly).